The primary structure comprises 412 residues: L-cysteine:1D-myo-inositol 2-amino-2-deoxy-alpha-D-glucopyranoside ligase (412 aa).

Residues 1 to 30 (MQTWSSPSVPKLRGAPRPLRLHDTATGEVR) form a disordered region. Zn(2+) is bound at residue Cys43. L-cysteinyl-5'-AMP contacts are provided by residues 43–46 (CGIT), Thr58, and 81–83 (NVT). The short motif at 45–55 (ITPYDATHLGH) is the 'HIGH' region element. Positions 187–192 (ERGGDP) match the 'ERGGDP' region motif. Trp227 serves as a coordination point for L-cysteinyl-5'-AMP. Zn(2+) is bound at residue Cys231. 249 to 251 (GSD) contacts L-cysteinyl-5'-AMP. His256 contacts Zn(2+). Ile283 contacts L-cysteinyl-5'-AMP. The 'KMSKS' region signature appears at 289–293 (KMSKS).

It belongs to the class-I aminoacyl-tRNA synthetase family. MshC subfamily. In terms of assembly, monomer. Requires Zn(2+) as cofactor.

The enzyme catalyses 1D-myo-inositol 2-amino-2-deoxy-alpha-D-glucopyranoside + L-cysteine + ATP = 1D-myo-inositol 2-(L-cysteinylamino)-2-deoxy-alpha-D-glucopyranoside + AMP + diphosphate + H(+). In terms of biological role, catalyzes the ATP-dependent condensation of GlcN-Ins and L-cysteine to form L-Cys-GlcN-Ins. This chain is L-cysteine:1D-myo-inositol 2-amino-2-deoxy-alpha-D-glucopyranoside ligase, found in Actinosynnema mirum (strain ATCC 29888 / DSM 43827 / JCM 3225 / NBRC 14064 / NCIMB 13271 / NRRL B-12336 / IMRU 3971 / 101).